The following is a 491-amino-acid chain: Delayed-rectifier potassium channel regulatory subunit KCNS3 (491 aa).

Over Met1–Leu182 the chain is Cytoplasmic. Residues Ser183 to Val204 form a helical membrane-spanning segment. The Extracellular portion of the chain corresponds to His205–Pro220. A helical transmembrane segment spans residues Val221–Ala243. The Cytoplasmic portion of the chain corresponds to Ala244–Pro254. Residues Leu255–Lys275 traverse the membrane as a helical segment. At Glu276–Met285 the chain is on the extracellular side. Residues Gly286–His306 form a helical; Voltage-sensor membrane-spanning segment. At Ser307–Tyr321 the chain is on the cytoplasmic side. Residues His322–Tyr343 form a helical membrane-spanning segment. Topologically, residues Ser344–Ile357 are extracellular. The segment at residues Pro358–Thr369 is an intramembrane region (helical). Positions Thr370–Asp375 match the Selectivity filter motif. The stretch at Thr370–His377 is an intramembrane region. Residues Pro378–Lys384 lie on the Extracellular side of the membrane. Residues Leu385–Tyr413 form a helical membrane-spanning segment. The Cytoplasmic portion of the chain corresponds to Gln414–Lys491.

This sequence belongs to the potassium channel family. S (TC 1.A.1.2) subfamily. Kv9.3/KCNS3 sub-subfamily. Heterotetramer with KCNB1. Does not form homomultimers.

It localises to the cell membrane. Its function is as follows. Potassium channel regulatory subunit that modulates the delayed rectifier potassium channel activity of KCNB1 by namely slowing down the deactivation and inactivation time constants. While it does not form functional channel on its own, it can form functional heterotetrameric channels with KCNB1. This chain is Delayed-rectifier potassium channel regulatory subunit KCNS3, found in Oryctolagus cuniculus (Rabbit).